Consider the following 237-residue polypeptide: Peptidase E (237 aa).

Residues Ser-122, Asp-137, and His-159 each act as charge relay system in the active site.

Belongs to the peptidase S51 family.

The protein localises to the cytoplasm. The catalysed reaction is Dipeptidase E catalyzes the hydrolysis of dipeptides Asp-|-Xaa. It does not act on peptides with N-terminal Glu, Asn or Gln, nor does it cleave isoaspartyl peptides.. Hydrolyzes dipeptides containing N-terminal aspartate residues. May play a role in allowing the cell to use peptide aspartate to spare carbon otherwise required for the synthesis of the aspartate family of amino acids. In Shewanella baltica (strain OS155 / ATCC BAA-1091), this protein is Peptidase E.